The sequence spans 189 residues: ATP synthase subunit b (189 aa).

The chain crosses the membrane as a helical span at residues 23–43 (IEIVLSLVVFGLLLFAVWKFV).

The protein belongs to the ATPase B chain family. F-type ATPases have 2 components, F(1) - the catalytic core - and F(0) - the membrane proton channel. F(1) has five subunits: alpha(3), beta(3), gamma(1), delta(1), epsilon(1). F(0) has three main subunits: a(1), b(2) and c(10-14). The alpha and beta chains form an alternating ring which encloses part of the gamma chain. F(1) is attached to F(0) by a central stalk formed by the gamma and epsilon chains, while a peripheral stalk is formed by the delta and b chains.

Its subcellular location is the cell membrane. Functionally, f(1)F(0) ATP synthase produces ATP from ADP in the presence of a proton or sodium gradient. F-type ATPases consist of two structural domains, F(1) containing the extramembraneous catalytic core and F(0) containing the membrane proton channel, linked together by a central stalk and a peripheral stalk. During catalysis, ATP synthesis in the catalytic domain of F(1) is coupled via a rotary mechanism of the central stalk subunits to proton translocation. In terms of biological role, component of the F(0) channel, it forms part of the peripheral stalk, linking F(1) to F(0). In Nocardioides sp. (strain ATCC BAA-499 / JS614), this protein is ATP synthase subunit b.